Here is a 205-residue protein sequence, read N- to C-terminus: MTEWLISNQLIDYNCAVKSMEEKIQQIHNNSADELVWLLQHPPLYTAGISATADDIVEKLFPIYKTGRGGKHTYHGPGQRIIYLMLNLKKRNKCDIKLYIRDLSKWIINVLKQFNILGEFREDRIGIWVNHNGVEKKIAAFGIRLRKWVTYHGIALNVFPDLSHYKGIIPCGLQGYGVTSMEELGVKVPLSELDDILKKEFYKIF.

Residues N30 to F205 form the BPL/LPL catalytic domain. Substrate-binding positions include R68–H75, A140–G142, and G153–A155. The Acyl-thioester intermediate role is filled by C171.

It belongs to the LipB family.

It localises to the cytoplasm. It carries out the reaction octanoyl-[ACP] + L-lysyl-[protein] = N(6)-octanoyl-L-lysyl-[protein] + holo-[ACP] + H(+). Its pathway is protein modification; protein lipoylation via endogenous pathway; protein N(6)-(lipoyl)lysine from octanoyl-[acyl-carrier-protein]: step 1/2. Functionally, catalyzes the transfer of endogenously produced octanoic acid from octanoyl-acyl-carrier-protein onto the lipoyl domains of lipoate-dependent enzymes. Lipoyl-ACP can also act as a substrate although octanoyl-ACP is likely to be the physiological substrate. The polypeptide is Octanoyltransferase (Wolbachia pipientis wMel).